The sequence spans 239 residues: Protein NtpR (239 aa).

Positions 12–239 (LIRATDTFQG…GLFDFFVQEF (228 aa)) constitute a Glutamine amidotransferase type-1 domain. Cysteine 113 serves as the catalytic Nucleophile. Catalysis depends on residues histidine 217 and glutamate 219.

The protein is Protein NtpR (ntpR) of Enterococcus hirae (strain ATCC 9790 / DSM 20160 / JCM 8729 / LMG 6399 / NBRC 3181 / NCIMB 6459 / NCDO 1258 / NCTC 12367 / WDCM 00089 / R).